The following is a 425-amino-acid chain: Receptor-like protein 55 (425 aa).

Positions 1-25 (MKPQQPQPPLLLLLLLPLLLTTVSS) are cleaved as a signal peptide. Topologically, residues 26–397 (YPLNPKQLKA…EEEHKGSNKT (372 aa)) are extracellular. Asn-40, Asn-54, Asn-79, and Asn-132 each carry an N-linked (GlcNAc...) asparagine glycan. LRR repeat units follow at residues 144–169 (LKNL…ILGN), 170–193 (MHKL…SFHS), 195–216 (LRYI…ITRL), 217–240 (KNLK…IKSL), 242–264 (FLKN…LSSI), 265–287 (SELT…FFSE), and 288–313 (MKNL…SFIK). 7 N-linked (GlcNAc...) asparagine glycosylation sites follow: Asn-182, Asn-202, Asn-223, Asn-245, Asn-278, Asn-308, and Asn-329. The interval 355 to 389 (PSQKEESLSGENDYDVEGGNEEKTENLKTKEEEEE) is disordered. Residues 374 to 389 (NEEKTENLKTKEEEEE) are compositionally biased toward basic and acidic residues. Asn-395 carries N-linked (GlcNAc...) asparagine glycosylation. Residues 398–418 (LFGLGIGLFSLVFLILFLFYL) traverse the membrane as a helical segment. Over 419-425 (AKRCRLI) the chain is Cytoplasmic.

It belongs to the RLP family.

The protein localises to the cell membrane. Its function is as follows. Involved in plant defense. This chain is Receptor-like protein 55, found in Arabidopsis thaliana (Mouse-ear cress).